The chain runs to 647 residues: UvrABC system protein C (647 aa).

The GIY-YIG domain occupies 16–95 (VEPGVYRFRD…IKEFDPRFNV (80 aa)). A UVR domain is found at 208–243 (DRYARELEQQMNAAAENLDFERAARLRDDRSALKRA).

This sequence belongs to the UvrC family. As to quaternary structure, interacts with UvrB in an incision complex.

It is found in the cytoplasm. In terms of biological role, the UvrABC repair system catalyzes the recognition and processing of DNA lesions. UvrC both incises the 5' and 3' sides of the lesion. The N-terminal half is responsible for the 3' incision and the C-terminal half is responsible for the 5' incision. This is UvrABC system protein C from Mycobacterium marinum (strain ATCC BAA-535 / M).